The following is a 332-amino-acid chain: 2,3-diketo-L-gulonate reductase (332 aa).

H44 serves as the catalytic Proton donor. Residues 168-174, 224-225, and 304-306 contribute to the NAD(+) site; these read ITMVDMS, WK, and GHE.

Belongs to the LDH2/MDH2 oxidoreductase family. DlgD subfamily. As to quaternary structure, homodimer.

Its subcellular location is the cytoplasm. It catalyses the reaction 3-dehydro-L-gulonate + NAD(+) = 2,3-dioxo-L-gulonate + NADH + H(+). It carries out the reaction 3-dehydro-L-gulonate + NADP(+) = 2,3-dioxo-L-gulonate + NADPH + H(+). Functionally, catalyzes the reduction of 2,3-diketo-L-gulonate in the presence of NADH, to form 3-keto-L-gulonate. The sequence is that of 2,3-diketo-L-gulonate reductase from Escherichia coli O127:H6 (strain E2348/69 / EPEC).